Reading from the N-terminus, the 498-residue chain is MSDQLQTTDLSRVHMVGIGGAGMSGIARILLDRGYQVSGSDMKESRSIMALRAAGAQIQVGHAEDNLRLSGEMPTVVVTSFAAIPQDNPELVGAREAGIPVLRRSDILALLLQDRRAFLLAGTHGKTSTTSMAVAALQAAGQDPSFAIGGQLNRAGTNAHNGTGEVFVAEADESDGSFLSYSPEIAVVTNIEPDHLDYFKTESAYREVFEKFAHRIVPGGFLVVCLDDPGSAALAEELIAGAEEGNPLPFTVVGYGTAEGCDAHPSVPPAAIIESTEVTAEGTVSALRLTEEVKKAAEEAAGTYSLRVAIPGIHMVLNAAAAVLGSVLLGADVDKVIAGIGGFDGVRRRFEYHGTRQDVEVYDDYAHHPTEVAAVLAAARQRVEARGGRIVAVFQPHLYSRTMNFADEFAEALSLADQVVLLDIFGAREEPVEGVDSRIIGNKIDASTDWVFEPDFSKVSSVVAGLVQPGDMVLTIGAGTVTMLADEILLELDRGDRG.

Residue 122-128 (GTHGKTS) participates in ATP binding.

It belongs to the MurCDEF family.

Its subcellular location is the cytoplasm. It carries out the reaction UDP-N-acetyl-alpha-D-muramate + L-alanine + ATP = UDP-N-acetyl-alpha-D-muramoyl-L-alanine + ADP + phosphate + H(+). The protein operates within cell wall biogenesis; peptidoglycan biosynthesis. Functionally, cell wall formation. This chain is UDP-N-acetylmuramate--L-alanine ligase, found in Corynebacterium jeikeium (strain K411).